The chain runs to 317 residues: MTDKLTSLRKLTTVVADTGDIAAMKLYQPQDATTNPSLILNAAQIPEYRKLIDEAIAWAREQSDSREQQIVDASDKLAVNIGLEILKLIPGRISTEVDARLSYDSERSVAKAKRLIKLYNEAGISNDRILIKLASTWQGIRAAEQLEKEGINCNLTLLFSFAQARACAEAGVYLISPFVGRILDWYKANSDQKEFAPHEDPGVISVTEIYQYYKQHGYDTVVMGASFRNSGEILELAGCDRLTIAPALLKELSEAQGEVERKLGYAGEIKARPEPLNEAQFYWEHHQDAMATEKLADGIRKFAIDQGKLEKMISDLL.

Residue Lys132 is the Schiff-base intermediate with substrate of the active site.

It belongs to the transaldolase family. Type 1 subfamily. In terms of assembly, homodimer.

It localises to the cytoplasm. It carries out the reaction D-sedoheptulose 7-phosphate + D-glyceraldehyde 3-phosphate = D-erythrose 4-phosphate + beta-D-fructose 6-phosphate. The protein operates within carbohydrate degradation; pentose phosphate pathway; D-glyceraldehyde 3-phosphate and beta-D-fructose 6-phosphate from D-ribose 5-phosphate and D-xylulose 5-phosphate (non-oxidative stage): step 2/3. In terms of biological role, transaldolase is important for the balance of metabolites in the pentose-phosphate pathway. The protein is Transaldolase of Photorhabdus laumondii subsp. laumondii (strain DSM 15139 / CIP 105565 / TT01) (Photorhabdus luminescens subsp. laumondii).